The chain runs to 375 residues: Squamosa promoter-binding-like protein 9 (375 aa).

Disordered stretches follow at residues 1-30 (MEMG…SFSG) and 43-73 (GGGG…QIPR). The span at 18-30 (SGGSSTESSSFSG) shows a compositional bias: low complexity. The segment at 71–148 (IPRCQVEGCG…AGHNERRRKP (78 aa)) adopts an SBP-type zinc-finger fold. Zn(2+)-binding residues include C74, C79, C96, H99, C115, C118, H122, and C134. A Bipartite nuclear localization signal motif is present at residues 131–147 (KRSCRRRLAGHNERRRK). 2 disordered regions span residues 252–278 (LLSN…NTWR) and 345–375 (SDHH…NWSL). A compositionally biased stretch (low complexity) spans 262–275 (NNNNNNNNNNNNNN). The segment covering 345–362 (SDHHHQSRRQYMEDENTR) has biased composition (basic and acidic residues). The span at 363–375 (AYDSSSHHTNWSL) shows a compositional bias: polar residues.

Zn(2+) is required as a cofactor.

The protein localises to the nucleus. It is found in the cytoplasm. In terms of biological role, trans-acting factor that binds specifically to the consensus nucleotide sequence 5'-TNCGTACAA-3'. The sequence is that of Squamosa promoter-binding-like protein 9 (SPL9) from Arabidopsis thaliana (Mouse-ear cress).